A 647-amino-acid chain; its full sequence is Glutamyl-tRNA(Gln) amidotransferase subunit B, mitochondrial (647 aa).

The transit peptide at 1–16 directs the protein to the mitochondrion; sequence MARNLCRNVQTTPRPL. The segment at 39–77 is disordered; that stretch reads PRPRYFGSSTAKSAKKKSNNKAYSGSSMSAGDASAGPSR. Positions 58–76 are enriched in low complexity; that stretch reads NKAYSGSSMSAGDASAGPS.

The protein belongs to the GatB/GatE family. GatB subfamily. Subunit of the heterotrimeric GatCAB amidotransferase (AdT) complex, composed of A, B and C subunits.

It is found in the mitochondrion. The enzyme catalyses L-glutamyl-tRNA(Gln) + L-glutamine + ATP + H2O = L-glutaminyl-tRNA(Gln) + L-glutamate + ADP + phosphate + H(+). Allows the formation of correctly charged Gln-tRNA(Gln) through the transamidation of misacylated Glu-tRNA(Gln) in the mitochondria. The reaction takes place in the presence of glutamine and ATP through an activated gamma-phospho-Glu-tRNA(Gln). The protein is Glutamyl-tRNA(Gln) amidotransferase subunit B, mitochondrial of Mycosarcoma maydis (Corn smut fungus).